The primary structure comprises 512 residues: ATP synthase subunit alpha (512 aa).

An ATP-binding site is contributed by 169-176 (GDRQTGKT).

It belongs to the ATPase alpha/beta chains family. F-type ATPases have 2 components, CF(1) - the catalytic core - and CF(0) - the membrane proton channel. CF(1) has five subunits: alpha(3), beta(3), gamma(1), delta(1), epsilon(1). CF(0) has three main subunits: a(1), b(2) and c(9-12). The alpha and beta chains form an alternating ring which encloses part of the gamma chain. CF(1) is attached to CF(0) by a central stalk formed by the gamma and epsilon chains, while a peripheral stalk is formed by the delta and b chains.

It is found in the cell inner membrane. The catalysed reaction is ATP + H2O + 4 H(+)(in) = ADP + phosphate + 5 H(+)(out). In terms of biological role, produces ATP from ADP in the presence of a proton gradient across the membrane. The alpha chain is a regulatory subunit. This chain is ATP synthase subunit alpha, found in Ruegeria pomeroyi (strain ATCC 700808 / DSM 15171 / DSS-3) (Silicibacter pomeroyi).